The following is a 463-amino-acid chain: Glutathione amide reductase (463 aa).

Ni(2+) contacts are provided by T2, Q3, and H4. FAD-binding positions include 14 to 15 (SG), E34, and T41. An intrachain disulfide couples C42 to C47. Residues K50 and 113 to 114 (HA) contribute to the FAD site. K50 contributes to the NAD(+) binding site. NAD(+)-binding positions include 174–180 (AGYIGIE), 197–198 (LE), V230, and G261. FAD is bound by residues D302 and 308 to 310 (QLT). NAD(+) contacts are provided by Q308 and V341. H437 serves as a coordination point for FAD. H437 acts as the Proton acceptor in catalysis.

This sequence belongs to the class-I pyridine nucleotide-disulfide oxidoreductase family. Homodimer. It depends on FAD as a cofactor.

It catalyses the reaction 2 glutathione amide + NAD(+) = glutathione amide disulfide + NADH + H(+). Its function is as follows. Catalyzes the reduction of glutathione amide disulfide (GASSAG) to restore glutathione amide (GASH) in the presence of NADH. May play a role in GASH metabolism under anaerobic conditions as a sulfide carrier necessary for cytoplasmic sulfide oxidation. In Marichromatium gracile (Chromatium gracile), this protein is Glutathione amide reductase.